Reading from the N-terminus, the 264-residue chain is Short chain dehydrogenase CPUR_05429 (264 aa).

4 residues coordinate NADP(+): I24, D70, N97, and R130. Catalysis depends on proton donor residues S146 and S147. Residues Y161, K165, and T196 each contribute to the NADP(+) site. Residue Y161 is the Proton acceptor of the active site. Catalysis depends on K165, which acts as the Lowers pKa of active site Tyr.

This sequence belongs to the short-chain dehydrogenases/reductases (SDR) family.

Its pathway is pigment biosynthesis. In terms of biological role, short chain dehydrogenase; part of the ergochrome gene cluster responsible for the typical purple-black color of the ergot sclerotia. The ergochrome gene cluster produces several ergot pigments including the yellow ergochrome secalonic acid and its derivatives, as well as the red anthraquinones endocrocin and clavorubin. The pathway begins with the synthesis of atrochrysone thioester by the polyketide synthase (PKS) CPUR_05437. The atrochrysone carboxyl ACP thioesterase CPUR_05436 then breaks the thioester bond and releases the atrochrysone carboxylic acid from CPUR_05437. The atrochrysone carboxylic acid is then converted to atrochrysone which is further transformed into emodin anthrone. The next step is performed by the anthrone oxygenase CPUR_05434 that catalyzes the oxidation of emodinanthrone to emodin. Emodin is further modified to yield monodictyphenone via several steps involving CPUR_05427, CPUR_05428, CPUR_05429 and CPUR_05430. The short chain dehydrogenase/reductase CPUR_05418 then catalyzes the C-5 ketoreduction to give the xanthone skeleton of the monomeric units. Ergochromes formation requires further dimerization steps of different xanthone units, probably catalyzed by the cytochrome P450 monooxygenase CPUR_05419. CPUR_05425, CPUR_05426 and CPUR_05431 are unique to Claviceps, thus it is likely that they are involved in further modification of xanthone units or in their dimerization. The yellow ergochromes and the red anthraquinone pigments endocrocin and clavorubin are products from the same PKS derived precursors and the latter are likely shunt products in the pathway of xanthone biosynthesis. It is proposed that atrochrysone carboxylic acid released from the PKS CPUR_05437 can also be converted to endocrocin anthrone which is further oxidized into endocrocin by CPUR_05435. Endocrocin could be then modified to clavorubin, possibly by CPUR_05423 and CPUR_05431. Clavorubin is the principal anthraquinone metabolite produced by the cluster with a much higher yield compared to endocrocin. This Claviceps purpurea (strain 20.1) (Ergot fungus) protein is Short chain dehydrogenase CPUR_05429.